Here is a 337-residue protein sequence, read N- to C-terminus: Glucokinase (337 aa).

11–16 serves as a coordination point for ATP; it reads ADIGGT.

The protein belongs to the bacterial glucokinase family.

The protein localises to the cytoplasm. It catalyses the reaction D-glucose + ATP = D-glucose 6-phosphate + ADP + H(+). This Xylella fastidiosa (strain M23) protein is Glucokinase.